We begin with the raw amino-acid sequence, 358 residues long: S-adenosylmethionine:tRNA ribosyltransferase-isomerase (358 aa).

The protein belongs to the QueA family. In terms of assembly, monomer.

It is found in the cytoplasm. The enzyme catalyses 7-aminomethyl-7-carbaguanosine(34) in tRNA + S-adenosyl-L-methionine = epoxyqueuosine(34) in tRNA + adenine + L-methionine + 2 H(+). The protein operates within tRNA modification; tRNA-queuosine biosynthesis. In terms of biological role, transfers and isomerizes the ribose moiety from AdoMet to the 7-aminomethyl group of 7-deazaguanine (preQ1-tRNA) to give epoxyqueuosine (oQ-tRNA). This is S-adenosylmethionine:tRNA ribosyltransferase-isomerase from Rhodopseudomonas palustris (strain BisA53).